Consider the following 131-residue polypeptide: Glycine cleavage system H protein (131 aa).

The 83-residue stretch at 24–106 (RVTVGISDHA…YGEGWIFVVE (83 aa)) folds into the Lipoyl-binding domain. An N6-lipoyllysine modification is found at Lys65.

The protein belongs to the GcvH family. As to quaternary structure, the glycine cleavage system is composed of four proteins: P, T, L and H. (R)-lipoate is required as a cofactor.

The glycine cleavage system catalyzes the degradation of glycine. The H protein shuttles the methylamine group of glycine from the P protein to the T protein. The polypeptide is Glycine cleavage system H protein (Xanthomonas campestris pv. campestris (strain 8004)).